Here is an 83-residue protein sequence, read N- to C-terminus: Mu-theraphotoxin-Hhn2o (83 aa).

Residues 1–21 (MKASMFLALAGLVLLFVVGYA) form the signal peptide. Positions 22-48 (SESEEKEFPIELLSKIFAVDVFKGEER) are excised as a propeptide. 3 disulfide bridges follow: Cys50/Cys65, Cys57/Cys70, and Cys64/Cys77. Leu81 bears the Leucine amide mark.

It belongs to the neurotoxin 10 (Hwtx-1) family. 15 (Hntx-3) subfamily. As to quaternary structure, monomer. In terms of tissue distribution, expressed by the venom gland.

The protein localises to the secreted. In terms of biological role, lethal neurotoxin. Selectively blocks tetrodotoxin-sensitive voltage-gated sodium channels (Nav). Does not affect tetrodotoxin-resistant voltage-gated sodium channels or calcium channels. The polypeptide is Mu-theraphotoxin-Hhn2o (Cyriopagopus hainanus (Chinese bird spider)).